A 50-amino-acid chain; its full sequence is Small, acid-soluble spore protein K (50 aa).

Residues methionine 1–arginine 50 form a disordered region. Composition is skewed to basic and acidic residues over residues phenylalanine 17–aspartate 33 and proline 40–arginine 50.

The protein belongs to the SspK family.

The protein localises to the spore core. The sequence is that of Small, acid-soluble spore protein K from Bacillus velezensis (strain DSM 23117 / BGSC 10A6 / LMG 26770 / FZB42) (Bacillus amyloliquefaciens subsp. plantarum).